Reading from the N-terminus, the 306-residue chain is Proline-rich transmembrane protein 1 (306 aa).

The tract at residues 1-142 (MSSEKSGLPD…PPPAPAQTAQ (142 aa)) is disordered. Residues 1–223 (MSSEKSGLPD…LEPRRPPHDY (223 aa)) are Cytoplasmic-facing. A compositionally biased stretch (pro residues) spans 15–36 (TSPPPYNAPQPPAEPPAPPPQA). The segment covering 40 to 49 (SHHHHHHHYH) has biased composition (basic residues). 2 stretches are compositionally biased toward pro residues: residues 87-111 (HAPP…PPDP) and 121-137 (PLPP…PPAP). A helical transmembrane segment spans residues 224-244 (MPIAVLTTICCFWPTGIIAIF). The Extracellular segment spans residues 245–275 (KAVQVRTALARGDMVSAEIASREARNFSFIS). The helical intramembrane region spans 276 to 296 (LAVGIAAMVLCTILTVVIIIA). The Extracellular portion of the chain corresponds to 297–306 (AQHHENYWDP).

It belongs to the CD225/Dispanin family. Component of the outer core of AMPAR complex. AMPAR complex consists of an inner core made of 4 pore-forming GluA/GRIA proteins (GRIA1, GRIA2, GRIA3 and GRIA4) and 4 major auxiliary subunits arranged in a twofold symmetry. One of the two pairs of distinct binding sites is occupied either by CNIH2, CNIH3 or CACNG2, CACNG3. The other harbors CACNG2, CACNG3, CACNG4, CACNG8 or GSG1L. This inner core of AMPAR complex is complemented by outer core constituents binding directly to the GluA/GRIA proteins at sites distinct from the interaction sites of the inner core constituents. Outer core constituents include at least PRRT1, PRRT2, CKAMP44/SHISA9, FRRS1L and NRN1. The proteins of the inner and outer core serve as a platform for other, more peripherally associated AMPAR constituents. Alone or in combination, these auxiliary subunits control the gating and pharmacology of the AMPAR complex and profoundly impact their biogenesis and protein processing.

It localises to the cell membrane. Its subcellular location is the synapse. Its function is as follows. Required to maintain a pool of extrasynaptic AMPA-regulated glutamate receptors (AMPAR) which is necessary for synapse development and function. Regulates basal AMPAR function and synaptic transmission during development but is dispensable at mature hippocampal synapses. Plays a role in regulating basal phosphorylation levels of glutamate receptor GRIA1 and promotes GRIA1 and GRIA2 cell surface expression. This is Proline-rich transmembrane protein 1 from Homo sapiens (Human).